We begin with the raw amino-acid sequence, 860 residues long: MSGMKRRYDYEEEDGYRDFRPRYSKRQRLPPVVQLCKDMLPDIRTIGESVKAFEEDIKFLSEAIINEFGNDEYFNNALLSTFNALILEQPHKQPAIALLTIVVNSGNPAAGKSVINYFYEKLQHLLDMTVVDDFEVTSNETGPWNKIKLTLRFLSLLSPVITLTELTNVYQRLFELAVQLNRSSDANTRNPLSEAIYTNTLLNIPYLFFFNKEDETLRTNVEDLIQYAESNYEVKTVDLSLTKEYNKNLPYEPVQWVQIVLSNVKNALANDMEELKNLFPDYQNLLPTSIEQQMFNDPLTIPEFEKLLPFSGLDKGLGSVDSMWKTPRTAFQVYLPNVVGDFSTVVPITTYTGMLFDDIIVDIVESLEFNRHEVARQVVTLDLYFKPGIFTEPGLSIAQLLVQHNEMPELSTYKIEDLAIENILGLIFKLPTVTQSFAYFYTLLVEICQNSPKAIAPVFGRAFRLFYNNLDNMDHELKMRYLDWFSIQMSNFNFSWKWNEWEQDSIAFSKSFYNPKITFAKNLIRKELRLTSNRPDVEDSLTPEFKQYLDASYISKDQLASYYQSFFEGFSFDPEVIKDNDLLFKNEVFPFHEKVQLILDYIHKQPLEKNISELESLLEDIKSAHGDKIPDFNRFTVTLLIQALVYSGNRSLSHANKYISDAKSDLVTILEKMEVPPEVKEQWIIEAVIRYWNCNSQNGFLIVDSFKHSELVTAKSILTFSLTDLNGQNLGLVDATSIESTFRTLTELALQQASDISVFEFVFERLLEIINDTVSQLGTNEEIVAPSVDNETMLDVDELARLDLIWKYESAVGFIKSILRKYSDEYSVLLDKFSAGLEQAVPHEPTRKQLDQWFNEIREL.

The MIF4G domain maps to 36-271 (CKDMLPDIRT…SNVKNALAND (236 aa)).

The protein belongs to the NCBP1 family. Component of the nuclear cap-binding complex (CBC).

The protein resides in the nucleus. Component of the cap-binding complex (CBC) involved in the nuclear export of capped U snRNAs. The CBC complex is required for efficient pre-mRNA splicing through efficient commitment complex and spliceosome formation; and involved in rRNA processing at sites A0, A1 and A2. The protein is Nuclear cap-binding protein complex subunit 1 (CBC1) of Eremothecium gossypii (strain ATCC 10895 / CBS 109.51 / FGSC 9923 / NRRL Y-1056) (Yeast).